Here is a 367-residue protein sequence, read N- to C-terminus: Dimethyladenosine transferase 1, mitochondrial (367 aa).

The transit peptide at 1–16 directs the protein to the mitochondrion; it reads MASASRLPPLPALRDF. Residues 30–33, Asn31, Leu33, Gly58, Glu80, Asp106, and Asn141 each bind S-adenosyl-L-methionine; that span reads QNYL.

The protein belongs to the class I-like SAM-binding methyltransferase superfamily. rRNA adenine N(6)-methyltransferase family. KsgA subfamily.

The protein resides in the mitochondrion. In terms of biological role, probable S-adenosyl-L-methionine-dependent methyltransferase which specifically dimethylates mitochondrial 12S rRNA at the conserved stem loop. Also required for basal transcription of mitochondrial DNA. Stimulates transcription independently of the methyltransferase activity. The polypeptide is Dimethyladenosine transferase 1, mitochondrial (tfbm-1) (Caenorhabditis elegans).